A 471-amino-acid chain; its full sequence is MSICEQYYPEEPTKPTVKTESIPGPESQKQLKELGEVFDTRPAYFLADYEKSLGNYITDVDGNTYLDLYAQISSIALGYNNPALIKAAQSPEMIRALVDRPALGNFPSKDLDKILKQILKSAPKGQDHVWSGLSGADANELAFKAAFIYYRAKQRGYDADFSEKENLSVMDNDAPGAPHLAVLSFKRAFHGRLFASGSTTCSKPIHKLDFPAFHWPHAEYPSYQYPLDENSDANRKEDDHCLAIVEELIKTWSIPVAALIIEPIQSEGGDNHASKYFLQKLRDITLKYNVVYIIDEVQTGVGATGKLWCHEYADIQPPVDLVTFSKKFQSAGYFFHDPKFIPNKPYRQFNTWCGEPARMIIAGAIGQEISDKKLTEQCSRVGDYLFKKLEGLQKKYPENFQNLRGKGRGTFIAWDLPTGEKRDLLLKKLKLNGCNVGGCAVHAVRLRPSLTFEEKHADIFIEALAKSVNEL.

Residue glycine 135–alanine 136 coordinates pyridoxal 5'-phosphate. Residue arginine 192 coordinates substrate. At lysine 326 the chain carries N6-(pyridoxal phosphate)lysine. Threonine 351 lines the pyridoxal 5'-phosphate pocket.

This sequence belongs to the class-III pyridoxal-phosphate-dependent aminotransferase family. Homodimer and homotetramer. It depends on pyridoxal 5'-phosphate as a cofactor.

Its subcellular location is the cytoplasm. The enzyme catalyses 4-aminobutanoate + 2-oxoglutarate = succinate semialdehyde + L-glutamate. Functionally, required for the degradation of gamma-aminobutyric acid (GABA), which is important for utilization of GABA as nitrogen source and for oxidative stress tolerance. Deaminates GABA to succinate semialdehyde, which in turn is converted to succinate by the succinate-semialdehyde dehydrogenase UGA2. Cannot transaminate beta-alanine (BAL). This Saccharomyces cerevisiae (strain ATCC 204508 / S288c) (Baker's yeast) protein is 4-aminobutyrate aminotransferase (UGA1).